An 819-amino-acid chain; its full sequence is Hypoxia-inducible factor 1-alpha (819 aa).

The tract at residues 1 to 31 (MEGAAGGEEKKNRMSSERRKEKSRDAARSRR) is disordered. Positions 1–402 (MEGAAGGEEK…KEPDALTLLA (402 aa)) are interaction with TSGA10. A compositionally biased stretch (basic and acidic residues) spans 7 to 31 (GEEKKNRMSSERRKEKSRDAARSRR). The 54-residue stretch at 18 to 71 (RRKEKSRDAARSRRSKESEVFYELAHQLPLPHNVSSHLDKASVMRLTISYLRVR) folds into the bHLH domain. The segment at 22 to 31 (KSRDAARSRR) is DNA-binding. The PAS 1 domain maps to 86 to 159 (KAQMNCFYLK…THRNGPIKKG (74 aa)). Residues 171 to 192 (RMKCTLTSRGRTMNIKSATWKV) form a required for heterodimer formation with ARNT region. The PAS 2 domain occupies 229 to 299 (PHPSNIEIPL…KTHHDMFTKG (71 aa)). Residue Ser248 is modified to Phosphoserine; by CK1. A PAC domain is found at 303-346 (TGQYRMLAKRGGYVWVETQATVIYNTKNSQPQCIVCVNYVVSGI). The interval 402–599 (APAAGDTIIS…NPPSVSTAFQ (198 aa)) is ODD. Pro403 is subject to 4-hydroxyproline. The segment covering 495–518 (IQDQPASPSDGSTRQSSPEPNSPS) has biased composition (polar residues). The interval 495–521 (IQDQPASPSDGSTRQSSPEPNSPSEYC) is disordered. Residues 532 to 576 (FKLELVEKLFAEDTEAKNPFSTQDTDLDLEMLAPYIPMDDDFQLR) are NTAD. Lys533 carries the N6-acetyllysine; alternate modification. Lys533 is covalently cross-linked (Glycyl lysine isopeptide (Lys-Gly) (interchain with G-Cter in ubiquitin); alternate). Glycyl lysine isopeptide (Lys-Gly) (interchain with G-Cter in ubiquitin) cross-links involve residues Lys539 and Lys548. Ser552 carries the post-translational modification Phosphoserine; by GSK3-beta. The residue at position 556 (Thr556) is a Phosphothreonine; by GSK3-beta. Pro565 carries the post-translational modification 4-hydroxyproline. Ser577 is modified (phosphoserine; by PLK3). Positions 577-778 (SFDQLSPLES…SDLACRLLGQ (202 aa)) are ID. Positions 581 to 685 (LSPLESSSPN…SHPRSPNVLS (105 aa)) are disordered. Residues 582–613 (SPLESSSPNPPSVSTAFQQTQLQEPTITTTTT) show a composition bias toward low complexity. Positions 614–628 (EELKTVTKDSTEDIK) are enriched in basic and acidic residues. Positions 632-655 (TSPSSTHTPKETTTATTSSPYSGT) are enriched in low complexity. At Ser650 the chain carries Phosphoserine; by PLK3. An N6-acetyllysine modification is found at Lys702. Positions 711-717 (RKRKMEH) match the Nuclear localization signal motif. The tract at residues 779-819 (SMDGSGLPQLTSYDCEVNAPIQGSRNLLQGEELLRALDQVN) is CTAD. At Cys793 the chain carries S-nitrosocysteine. The residue at position 796 (Asn796) is a (3S)-3-hydroxyasparagine.

In terms of assembly, interacts with the ARNT; forms a heterodimer that binds core DNA sequence 5'-TACGTG-3' within the hypoxia response element (HRE) of target gene promoters. Interacts with COPS5; the interaction increases the transcriptional activity of HIF1A through increased stability. Interacts with EP300 (via TAZ-type 1 domains); the interaction is stimulated in response to hypoxia and inhibited by CITED2. Interacts with CREBBP (via TAZ-type 1 domains). Interacts with NCOA1, NCOA2, APEX1 and HSP90. Interacts (hydroxylated within the ODD domain) with VHLL (via beta domain); the interaction, leads to polyubiquitination and subsequent HIF1A proteasomal degradation. During hypoxia, sumoylated HIF1A also binds VHL; the interaction promotes the ubiquitination of HIF1A. Interacts with SENP1; the interaction desumoylates HIF1A resulting in stabilization and activation of transcription. Interacts (via the ODD domain) with NAA10; the interaction appears not to acetylate HIF1A nor have any affect on protein stability, during hypoxia. Interacts with RWDD3; the interaction enhances HIF1A sumoylation. Interacts with TSGA10. Interacts with HIF3A. Interacts with RORA (via the DNA binding domain); the interaction enhances HIF1A transcription under hypoxia through increasing protein stability. Interaction with PSMA7 inhibits the transactivation activity of HIF1A under both normoxic and hypoxia-mimicking conditions. Interacts with USP20. Interacts with RACK1; promotes HIF1A ubiquitination and proteasome-mediated degradation. Interacts (via N-terminus) with USP19. Interacts with SIRT2. Interacts (deacetylated form) with EGLN1. Interacts with CBFA2T3. Interacts with HSP90AA1 and HSP90AB1. Interacts with DCUN1D1; this interaction increases the interaction between VHL and DCUN1D1. Interacts with HIF1AN. Post-translationally, S-nitrosylation of Cys-793 may be responsible for increased recruitment of p300 coactivator necessary for transcriptional activity of HIF-1 complex. Acetylation of Lys-533 by ARD1 increases interaction with VHL and stimulates subsequent proteasomal degradation. Deacetylation of Lys-702 by SIRT2 increases its interaction with and hydroxylation by EGLN1 thereby inactivating HIF1A activity by inducing its proteasomal degradation. In terms of processing, requires phosphorylation for DNA-binding. Phosphorylation at Ser-248 by CSNK1D/CK1 represses kinase activity and impairs ARNT binding. Phosphorylation by GSK3-beta and PLK3 promote degradation by the proteasome. Post-translationally, the iron and 2-oxoglutarate dependent 3-hydroxylation of asparagine is (S) stereospecific within HIF CTAD domains. Sumoylated; with SUMO1 under hypoxia. Sumoylation is enhanced through interaction with RWDD3. Both sumoylation and desumoylation seem to be involved in the regulation of its stability during hypoxia. Sumoylation can promote either its stabilization or its VHL-dependent degradation by promoting hydroxyproline-independent HIF1A-VHL complex binding, thus leading to HIF1A ubiquitination and proteasomal degradation. Desumoylation by SENP1 increases its stability amd transcriptional activity. There is a disaccord between various publications on the effect of sumoylation and desumoylation on its stability and transcriptional activity. In terms of processing, in normoxia, is hydroxylated on Pro-403 and Pro-565 in the oxygen-dependent degradation domain (ODD) by EGLN1/PHD2 and EGLN2/PHD1. EGLN3/PHD3 has also been shown to hydroxylate Pro-565. The hydroxylated prolines promote interaction with VHL, initiating rapid ubiquitination and subsequent proteasomal degradation. Deubiquitinated by USP20. Under hypoxia, proline hydroxylation is impaired and ubiquitination is attenuated, resulting in stabilization. In normoxia, is hydroxylated on Asn-796 by HIF1AN, thus abrogating interaction with CREBBP and EP300 and preventing transcriptional activation. Repressed by iron ion, via Fe(2+) prolyl hydroxylase (PHD) enzymes-mediated hydroxylation and subsequent proteasomal degradation.

The protein resides in the cytoplasm. Its subcellular location is the nucleus. It is found in the nucleus speckle. With respect to regulation, induced by reactive oxygen species (ROS). Functionally, functions as a master transcriptional regulator of the adaptive response to hypoxia. Under hypoxic conditions, activates the transcription of over 40 genes, including erythropoietin, glucose transporters, glycolytic enzymes, vascular endothelial growth factor, HILPDA, and other genes whose protein products increase oxygen delivery or facilitate metabolic adaptation to hypoxia. Plays an essential role in embryonic vascularization, tumor angiogenesis and pathophysiology of ischemic disease. Heterodimerizes with ARNT; heterodimer binds to core DNA sequence 5'-TACGTG-3' within the hypoxia response element (HRE) of target gene promoters. Activation requires recruitment of transcriptional coactivators such as CREBBP and EP300. Activity is enhanced by interaction with NCOA1 and/or NCOA2. Interaction with redox regulatory protein APEX1 seems to activate CTAD and potentiates activation by NCOA1 and CREBBP. Involved in the axonal distribution and transport of mitochondria in neurons during hypoxia. The protein is Hypoxia-inducible factor 1-alpha (HIF1A) of Eospalax fontanierii baileyi (Plateau zokor).